Reading from the N-terminus, the 148-residue chain is Protein Turandot Z (148 aa).

An N-terminal signal peptide occupies residues 1–23; the sequence is MYFAIRLSFVLAVLFCLTGNGSA.

Belongs to the Turandot family.

The protein localises to the secreted. Functionally, a humoral factor that may play a role in stress tolerance. In Drosophila simulans (Fruit fly), this protein is Protein Turandot Z.